Here is a 94-residue protein sequence, read N- to C-terminus: Ferredoxin-like protein (94 aa).

2 consecutive 4Fe-4S ferredoxin-type domains span residues 20 to 52 (PHIR…RETN) and 53 to 83 (GKVT…WEWP).

This sequence to ferredoxins from P.putida and C.tartarivorum, ferredoxin I from A.vinelandii, ferredoxin II from D.desulfuricans.

Could be a 3Fe-4S cluster-containing protein. This Azotobacter vinelandii protein is Ferredoxin-like protein (fixX).